We begin with the raw amino-acid sequence, 93 residues long: Neutrophil cationic peptide 1 type B (93 aa).

The signal sequence occupies residues 1-19; it reads MRTVPLFAACLLLTLMAQA. The propeptide occupies 20–62; it reads EPLPRAADHSDTKMKGDREDHVAVISFWEEESTSLQDAGAGAG. Disulfide bonds link C65–C93, C67–C82, and C72–C92.

It belongs to the alpha-defensin family. As to expression, bone marrow.

The protein resides in the secreted. Has antibiotic, anti-fungi and antiviral activity. The polypeptide is Neutrophil cationic peptide 1 type B (Cavia porcellus (Guinea pig)).